Here is a 1830-residue protein sequence, read N- to C-terminus: Urea amidolyase (1830 aa).

Residues 115-122, Lys-740, Glu-823, and Asn-858 contribute to the ATP site; that span reads GAIVIGKT. Residues 625–1068 enclose the Biotin carboxylation domain; that stretch reads PFETVLIANR…ATKILDSYDY (444 aa). Positions 744 to 941 constitute an ATP-grasp domain; the sequence is REIAEKAGVP…LVEWMLRIAA (198 aa). One can recognise a Biotinyl-binding domain in the interval 1752-1830; sequence AVEEEYPEDA…DAGDLVAVIQ (79 aa). Lys-1796 bears the N6-biotinyllysine mark.

The protein belongs to the DUR1,2 family. As to quaternary structure, monomer. Biotin serves as cofactor.

It carries out the reaction urea + hydrogencarbonate + ATP = urea-1-carboxylate + ADP + phosphate + H(+). The enzyme catalyses urea-1-carboxylate + H2O + 3 H(+) = 2 NH4(+) + 2 CO2. It participates in nitrogen metabolism; urea degradation; CO(2) and NH(3) from urea (allophanate route): step 1/2. It functions in the pathway nitrogen metabolism; urea degradation; CO(2) and NH(3) from urea (allophanate route): step 2/2. Its function is as follows. Involved in uracil catabolism. Hydrolysis of urea to ammonia and CO(2). This chain is Urea amidolyase (DUR1,2), found in Lachancea kluyveri (Yeast).